The primary structure comprises 90 residues: Small ribosomal subunit protein uS15c (90 aa).

It belongs to the universal ribosomal protein uS15 family. As to quaternary structure, part of the 30S ribosomal subunit.

It is found in the plastid. The protein resides in the chloroplast. In Platanus occidentalis (Sycamore), this protein is Small ribosomal subunit protein uS15c (rps15).